Consider the following 160-residue polypeptide: Baculoviral IAP repeat-containing protein 5.1-A (160 aa).

Residues 27-97 (RLATFADWPF…KRSANCGFLS (71 aa)) form a BIR repeat. A Phosphothreonine; by CDK1 modification is found at T43. Zn(2+) is bound by residues C66, C69, H86, and C93.

The protein belongs to the IAP family. Component of the CPC at least composed of survivin/birc5, incenp, cdca8/borealin and/or cdca9/dasra-A, and aurkb/aurora-B. Interacts directly with incenp (via N-terminus), and may weakly interact with aurkb (via N-terminus) to stabilize the complex. Interacts with GTP-bound ran in both the S and M phases of the cell cycle. Also found in a complex with ubiquitin-mediated signaling proteins including at least usp9x/xFAM, nploc4/npl4 and ufd1. Ubiquitination is required for centrosome-targeting.

It is found in the cytoplasm. The protein resides in the nucleus. The protein localises to the chromosome. Its subcellular location is the centromere. It localises to the cytoskeleton. It is found in the spindle. Functionally, component of the chromosomal passenger complex (CPC), a complex that acts as a key regulator of mitosis. The CPC complex has essential functions at the centromere in ensuring correct chromosome alignment and segregation and is required for chromatin-induced microtubule stabilization and spindle assembly. Stimulates the mitotic kinase activity of aurkb/aurora-B in the CPC. Does not appear to exhibit anti-apoptotic activity. The chain is Baculoviral IAP repeat-containing protein 5.1-A (birc5.1-a) from Xenopus laevis (African clawed frog).